We begin with the raw amino-acid sequence, 178 residues long: Large ribosomal subunit protein uL6 (178 aa).

Belongs to the universal ribosomal protein uL6 family. In terms of assembly, part of the 50S ribosomal subunit.

This protein binds to the 23S rRNA, and is important in its secondary structure. It is located near the subunit interface in the base of the L7/L12 stalk, and near the tRNA binding site of the peptidyltransferase center. The chain is Large ribosomal subunit protein uL6 from Buchnera aphidicola subsp. Schizaphis graminum (strain Sg).